We begin with the raw amino-acid sequence, 115 residues long: Large ribosomal subunit protein eL30 (115 aa).

Ser10 and Ser16 each carry phosphoserine. Lys26 carries the post-translational modification N6-acetyllysine; alternate. A Glycyl lysine isopeptide (Lys-Gly) (interchain with G-Cter in SUMO2); alternate cross-link involves residue Lys26.

Belongs to the eukaryotic ribosomal protein eL30 family. Component of the large ribosomal subunit.

Its subcellular location is the cytoplasm. Its function is as follows. Component of the large ribosomal subunit. The ribosome is a large ribonucleoprotein complex responsible for the synthesis of proteins in the cell. The chain is Large ribosomal subunit protein eL30 (RPL30) from Homo sapiens (Human).